Consider the following 209-residue polypeptide: GTP-binding protein RHO1 (209 aa).

N-acetylserine is present on S2. Residue 17–24 (GDGACGKT) coordinates GTP. The Effector region signature appears at 39 to 47 (YVPTVFENY). GTP contacts are provided by residues 64–68 (DTAGQ) and 122–125 (CKVD). The interval 187-209 (KSKTNGKAKKNTTEKKKKKCVLL) is disordered. The span at 190-209 (TNGKAKKNTTEKKKKKCVLL) shows a compositional bias: basic residues. Residue C206 is modified to Cysteine methyl ester. Residue C206 is the site of S-geranylgeranyl cysteine attachment. Residues 207–209 (VLL) constitute a propeptide, removed in mature form.

Belongs to the small GTPase superfamily. Rho family. In terms of assembly, interacts with BEM4; the interaction is direct. Interacts with SEC3; the interaction is direct. Interacts with the GAP BAG7. Interacts with the GAP LRG1. Interacts with the GAP SAC7. Interacts with the GAP RDI1. Interacts with the 1,3-beta-glucan synthase component FKS1. Interacts with the protein kinase PKC1. Interacts with the G protein beta subunit STE4. Interacts with SKN7. Interacts with TUS1. Interacts with BNI1.

Its subcellular location is the cell membrane. The protein resides in the endosome membrane. The protein localises to the peroxisome membrane. The enzyme catalyses GTP + H2O = GDP + phosphate + H(+). With respect to regulation, alternates between an inactive form bound to GDP and an active form bound to GTP. Activated by the guanine nucleotide-exchange factors (GEFs) ROM1, ROM2 and TUS1, and inactivated by GTPase-activating proteins (GAPs) BAG7, BEM2, LRG1, and SAC7, and the Rho GDP-dissociation inhibitor RDI1. The different GAPs regulate RHO1 in a target-specific manner. Acts as a central regulator in the cell wall integrity signaling pathway, which is regulated by the cell cycle and in response to various types of cell wall stress. Integrates signals from different cell surface sensors, and activates a set of effectors, regulating processes including beta-glucan synthesis at the site of wall remodeling, gene expression related to cell wall biogenesis, organization of the actin cytoskeleton, and protein- and secretory vesicle-targeting to the growth site. Activates the protein kinase C (PKC1) MAP kinase cascade, the beta-1,3-glucan synthase (FKS1), the formin BNI1, the exocyst component SEC3 and the transcription factor SKN7. In Saccharomyces cerevisiae (strain ATCC 204508 / S288c) (Baker's yeast), this protein is GTP-binding protein RHO1 (RHO1).